Consider the following 259-residue polypeptide: Global transcriptional regulator CodY (259 aa).

The GAF domain stretch occupies residues 1 to 155; the sequence is MNLLEKTRKI…GATVVGMEIL (155 aa). The segment at residues 203 to 222 is a DNA-binding region (H-T-H motif); the sequence is ASKIADRVGITRSVIVNALR. S215 is modified (phosphoserine).

This sequence belongs to the CodY family.

It localises to the cytoplasm. Its function is as follows. DNA-binding global transcriptional regulator which is involved in the adaptive response to starvation and acts by directly or indirectly controlling the expression of numerous genes in response to nutrient availability. During rapid exponential growth, CodY is highly active and represses genes whose products allow adaptation to nutrient depletion. The sequence is that of Global transcriptional regulator CodY from Lysinibacillus sphaericus (strain C3-41).